Here is a 131-residue protein sequence, read N- to C-terminus: Small ribosomal subunit protein uS11 (131 aa).

The protein belongs to the universal ribosomal protein uS11 family. Part of the 30S ribosomal subunit. Interacts with proteins S7 and S18. Binds to IF-3.

Its function is as follows. Located on the platform of the 30S subunit, it bridges several disparate RNA helices of the 16S rRNA. Forms part of the Shine-Dalgarno cleft in the 70S ribosome. The chain is Small ribosomal subunit protein uS11 from Cellvibrio japonicus (strain Ueda107) (Pseudomonas fluorescens subsp. cellulosa).